We begin with the raw amino-acid sequence, 42 residues long: Photosystem I reaction center subunit IX (42 aa).

Residues 7 to 27 form a helical membrane-spanning segment; it reads YLSTAPVLAAIWFAILAGLLI.

It belongs to the PsaJ family.

The protein resides in the plastid. It localises to the chloroplast thylakoid membrane. May help in the organization of the PsaE and PsaF subunits. The chain is Photosystem I reaction center subunit IX from Zygnema circumcarinatum (Green alga).